The following is a 454-amino-acid chain: Chromosomal replication initiator protein DnaA (454 aa).

The interval 1–80 is domain I, interacts with DnaA modulators; it reads MNLSNLWQSC…NPELRISLKE (80 aa). The domain II stretch occupies residues 80 to 117; sequence EGVKPAPKIVESTPNTSLRSESAVDFQAESSASVKFES. The segment at 118–335 is domain III, AAA+ region; sequence HLNTKHLFDN…GALNRVKAMQ (218 aa). ATP is bound by residues Gly-163, Gly-165, Lys-166, and Thr-167. The tract at residues 336–454 is domain IV, binds dsDNA; it reads DFKGGDIDID…WANLIRTLSA (119 aa).

Belongs to the DnaA family. In terms of assembly, oligomerizes as a right-handed, spiral filament on DNA at oriC.

Its subcellular location is the cytoplasm. Plays an essential role in the initiation and regulation of chromosomal replication. ATP-DnaA binds to the origin of replication (oriC) to initiate formation of the DNA replication initiation complex once per cell cycle. Binds the DnaA box (a 9 base pair repeat at the origin) and separates the double-stranded (ds)DNA. Forms a right-handed helical filament on oriC DNA; dsDNA binds to the exterior of the filament while single-stranded (ss)DNA is stabiized in the filament's interior. The ATP-DnaA-oriC complex binds and stabilizes one strand of the AT-rich DNA unwinding element (DUE), permitting loading of DNA polymerase. After initiation quickly degrades to an ADP-DnaA complex that is not apt for DNA replication. Binds acidic phospholipids. The sequence is that of Chromosomal replication initiator protein DnaA from Haemophilus influenzae (strain ATCC 51907 / DSM 11121 / KW20 / Rd).